Reading from the N-terminus, the 587-residue chain is Protein IQ-DOMAIN 31 (587 aa).

The segment at 57–80 is disordered; that stretch reads ETNTVDRSGGMLETQNVGPEEISD. Ser79 carries the post-translational modification Phosphoserine. IQ domains follow at residues 112 to 140, 141 to 163, and 164 to 188; these read REIA…GIIR, LQAL…SVMG, and IVRL…VYRK. The tract at residues 149 to 159 is calmodulin-binding; it reads LVRRQAVATLF. Positions 176 to 183 match the Nuclear localization signal motif; it reads IRKSDIGV. A disordered region spans residues 344 to 587; that stretch reads NPVVESSIQP…AKTTPAERKR (244 aa). 2 stretches are compositionally biased toward basic and acidic residues: residues 357-373 and 390-413; these read PRKE…KTRE and CDEK…EMEV. Residues 424–434 are compositionally biased toward polar residues; sequence ALDSSLVNQID. Composition is skewed to basic and acidic residues over residues 435–472 and 482–494; these read SNEK…ENQK and KTER…HHET. Composition is skewed to polar residues over residues 495–506 and 544–561; these read SPSIPSYMQATK and RITS…SGDK.

The protein belongs to the IQD family. In terms of assembly, binds to multiple calmodulin (CaM) in the presence of Ca(2+) and CaM-like proteins.

The protein resides in the nucleus. The protein localises to the nucleus envelope. Its subcellular location is the cytoplasm. It is found in the cytoskeleton. It localises to the cell membrane. In terms of biological role, may be involved in cooperative interactions with calmodulins or calmodulin-like proteins. Recruits calmodulin proteins to microtubules, thus being a potential scaffold in cellular signaling and trafficking. May associate with nucleic acids and regulate gene expression at the transcriptional or post-transcriptional level. In Arabidopsis thaliana (Mouse-ear cress), this protein is Protein IQ-DOMAIN 31.